A 519-amino-acid polypeptide reads, in one-letter code: Serine/threonine-protein kinase RIO3 (519 aa).

A phosphoserine mark is found at Ser8 and Ser112. The interval 121–159 (PYEDSDSSEDEVDWQDTRDDPYRPAKPVPTPKKGFIGKG) is disordered. Tyr122 is subject to Phosphotyrosine. Positions 124 to 134 (DSDSSEDEVDW) are enriched in acidic residues. Phosphoserine occurs at positions 125, 127, and 128. In terms of domain architecture, Protein kinase spans 251 to 519 (ETITGCISTG…DGDPPLLYDE (269 aa)). ATP is bound by residues 257–265 (ISTGKESVV) and Lys290. Residue Asp406 is the Proton acceptor of the active site.

It belongs to the protein kinase superfamily. RIO-type Ser/Thr kinase family. As to quaternary structure, interacts with CASP10. Interacts with IRF3; RIOK3 probably mediates the interaction of TBK1 with IRF3. Associated with 40S pre-ribosomal particles. Mg(2+) serves as cofactor. Autophosphorylated (in vitro). Widely expressed.

The protein resides in the cytoplasm. The enzyme catalyses L-seryl-[protein] + ATP = O-phospho-L-seryl-[protein] + ADP + H(+). It carries out the reaction L-threonyl-[protein] + ATP = O-phospho-L-threonyl-[protein] + ADP + H(+). Functionally, involved in regulation of type I interferon (IFN)-dependent immune response which plays a critical role in the innate immune response against DNA and RNA viruses. May act as an adapter protein essential for the recruitment of TBK1 to IRF3. Phosphorylates IFIH1 on 'Ser-828' interfering with IFIH1 filament assembly on long dsRNA and resulting in attenuated IFIH1-signaling. Can inhibit CASP10 isoform 7-mediated activation of the NF-kappaB signaling pathway. May play a role in the biogenesis of the 40S ribosomal subunit. Involved in the processing of 21S pre-rRNA to the mature 18S rRNA. The chain is Serine/threonine-protein kinase RIO3 (RIOK3) from Homo sapiens (Human).